Here is a 449-residue protein sequence, read N- to C-terminus: Trigger factor (449 aa).

One can recognise a PPIase FKBP-type domain in the interval 174 to 261 (GDIAVVGFKG…LKDLKTRELP (88 aa)). A disordered region spans residues 430–449 (ENSTVTEKAPDKDKPSVTDA). Over residues 437-449 (KAPDKDKPSVTDA) the composition is skewed to basic and acidic residues.

It belongs to the FKBP-type PPIase family. Tig subfamily.

The protein localises to the cytoplasm. It catalyses the reaction [protein]-peptidylproline (omega=180) = [protein]-peptidylproline (omega=0). In terms of biological role, involved in protein export. Acts as a chaperone by maintaining the newly synthesized protein in an open conformation. Functions as a peptidyl-prolyl cis-trans isomerase. This chain is Trigger factor, found in Synechococcus sp. (strain CC9311).